We begin with the raw amino-acid sequence, 363 residues long: Cyanide hydratase (363 aa).

The CN hydrolase domain occupies 6–285 (YKAACVTSEP…DGLLFVDIDL (280 aa)). The active-site Proton acceptor is Glu46. Lys128 is a catalytic residue. Cys163 functions as the Nucleophile in the catalytic mechanism.

The protein belongs to the carbon-nitrogen hydrolase superfamily. Nitrilase family. As to quaternary structure, oligomer of dimers, forming left-handed helical fibers.

The enzyme catalyses formamide = hydrogen cyanide + H2O. In terms of biological role, catalyzes the hydration of cyanide to formamide. Degradation of cyanide may be important for plant pathogenic fungi in infection of cyanogenic plants. This chain is Cyanide hydratase (CyhAB), found in Alternaria brassicicola (Dark leaf spot agent).